We begin with the raw amino-acid sequence, 430 residues long: Gustatory receptor-like 43a (430 aa).

Topologically, residues 1–31 (MSTGSHSPEAMWSATNFRRHQRKPNQVLHRW) are cytoplasmic. Residues 32 to 52 (FFKGSAWIIYAIACGLHFFKL) form a helical membrane-spanning segment. At 53-79 (HYNERTNQVEESQYHRIWSKIVVVLKV) the chain is on the extracellular side. The chain crosses the membrane as a helical span at residues 80 to 100 (ILLASPYLQYFVLGLGIYIHI). Over 101-110 (TLVQDSKAQN) the chain is Cytoplasmic. A helical membrane pass occupies residues 111-131 (FLMSLIVLGIVIGVLRRLLIF). The Extracellular portion of the chain corresponds to 132–168 (LHLKRDRRFLKHTVNEILHITSALEQKFGMEYKCDST). Residues 169 to 189 (LLVVYLAKLWILTVMLDSLWY) traverse the membrane as a helical segment. Over 190–277 (KPYFLSSIFL…RDNVSWLSTS (88 aa)) the chain is Cytoplasmic. A helical membrane pass occupies residues 278-298 (VYLMIFTCIFNAELLIECSLF). Over 299 to 306 (AGDELENK) the chain is Extracellular. Residues 307-327 (IYIITDGCLGPVCVPILYVLI) form a helical membrane-spanning segment. Residues 328–396 (LGMCTDRFRD…IILDITCDRE (69 aa)) lie on the Cytoplasmic side of the membrane. Residues 397-417 (FVMDYIVTVILTALSLVQYTI) traverse the membrane as a helical segment. Topologically, residues 418 to 430 (STGGNISECVTHK) are extracellular. N-linked (GlcNAc...) asparagine glycosylation occurs at Asn422.

The protein resides in the cell membrane. This Drosophila melanogaster (Fruit fly) protein is Gustatory receptor-like 43a.